A 72-amino-acid polypeptide reads, in one-letter code: Large ribosomal subunit protein uL29 (72 aa).

It belongs to the universal ribosomal protein uL29 family.

The protein is Large ribosomal subunit protein uL29 of Chlamydia felis (strain Fe/C-56) (Chlamydophila felis).